Consider the following 159-residue polypeptide: Transcriptional repressor NrdR (159 aa).

A zinc finger spans residues 3 to 34 (CPFCGAEDTSVVDSRISEEGARIRRRRRCVEC). The region spanning 49 to 139 (PQVIKQDGNR…VYRSFEDVGD (91 aa)) is the ATP-cone domain.

This sequence belongs to the NrdR family. The cofactor is Zn(2+).

In terms of biological role, negatively regulates transcription of bacterial ribonucleotide reductase nrd genes and operons by binding to NrdR-boxes. The polypeptide is Transcriptional repressor NrdR (Nitrosomonas europaea (strain ATCC 19718 / CIP 103999 / KCTC 2705 / NBRC 14298)).